We begin with the raw amino-acid sequence, 200 residues long: Holliday junction branch migration complex subunit RuvA (200 aa).

Residues 1–65 (MYEYIKGTLT…ETEHVLYGFS (65 aa)) are domain I. Positions 66 to 144 (SRAEKECFRL…TLMPLYLEEP (79 aa)) are domain II. The segment at 145 to 149 (VVPSS) is flexible linker. Residues 150–200 (TANSSFKEGIGALMNLGFSRLAADRMMTEAVKELSEEASVAELLPIALRKS) are domain III.

The protein belongs to the RuvA family. As to quaternary structure, homotetramer. Forms an RuvA(8)-RuvB(12)-Holliday junction (HJ) complex. HJ DNA is sandwiched between 2 RuvA tetramers; dsDNA enters through RuvA and exits via RuvB. An RuvB hexamer assembles on each DNA strand where it exits the tetramer. Each RuvB hexamer is contacted by two RuvA subunits (via domain III) on 2 adjacent RuvB subunits; this complex drives branch migration. In the full resolvosome a probable DNA-RuvA(4)-RuvB(12)-RuvC(2) complex forms which resolves the HJ.

The protein localises to the cytoplasm. Functionally, the RuvA-RuvB-RuvC complex processes Holliday junction (HJ) DNA during genetic recombination and DNA repair, while the RuvA-RuvB complex plays an important role in the rescue of blocked DNA replication forks via replication fork reversal (RFR). RuvA specifically binds to HJ cruciform DNA, conferring on it an open structure. The RuvB hexamer acts as an ATP-dependent pump, pulling dsDNA into and through the RuvAB complex. HJ branch migration allows RuvC to scan DNA until it finds its consensus sequence, where it cleaves and resolves the cruciform DNA. The sequence is that of Holliday junction branch migration complex subunit RuvA from Chlamydia trachomatis serovar A (strain ATCC VR-571B / DSM 19440 / HAR-13).